We begin with the raw amino-acid sequence, 208 residues long: Putative ADP-ribose pyrophosphatase YjhB (208 aa).

Residues 69–195 (TPKADVRGAV…NTPSQLSMLF (127 aa)) enclose the Nudix hydrolase domain. Positions 100–121 (GFCEIGLSPAENVVKEIKEESG) match the Nudix box motif. Mg(2+) is bound by residues E115 and E119.

The protein belongs to the Nudix hydrolase family. It depends on Mg(2+) as a cofactor. The cofactor is Mn(2+).

Probably mediates the hydrolysis of some nucleoside diphosphate derivatives. The sequence is that of Putative ADP-ribose pyrophosphatase YjhB (yjhB) from Bacillus subtilis (strain 168).